Reading from the N-terminus, the 351-residue chain is Farnesyl pyrophosphate synthase (351 aa).

3 residues coordinate isopentenyl diphosphate: lysine 51, arginine 54, and glutamine 92. Mg(2+)-binding residues include aspartate 99 and aspartate 103. Arginine 108 is a dimethylallyl diphosphate binding site. Residue arginine 109 participates in isopentenyl diphosphate binding. Residues lysine 196, threonine 197, glutamine 236, lysine 253, and lysine 262 each coordinate dimethylallyl diphosphate.

The protein belongs to the FPP/GGPP synthase family. Mg(2+) serves as cofactor.

The catalysed reaction is isopentenyl diphosphate + dimethylallyl diphosphate = (2E)-geranyl diphosphate + diphosphate. It carries out the reaction isopentenyl diphosphate + (2E)-geranyl diphosphate = (2E,6E)-farnesyl diphosphate + diphosphate. Its pathway is isoprenoid biosynthesis; farnesyl diphosphate biosynthesis; farnesyl diphosphate from geranyl diphosphate and isopentenyl diphosphate: step 1/1. It participates in isoprenoid biosynthesis; geranyl diphosphate biosynthesis; geranyl diphosphate from dimethylallyl diphosphate and isopentenyl diphosphate: step 1/1. Functionally, farnesyl pyrophosphate synthase; part of the second module of ergosterol biosynthesis pathway that includes the middle steps of the pathway. ERG20 catalyzes the sequential condensation of isopentenyl pyrophosphate with dimethylallyl pyrophosphate, and then with the resultant geranylpyrophosphate to the ultimate product farnesyl pyrophosphate. The second module is carried out in the vacuole and involves the formation of farnesyl diphosphate, which is also an important intermediate in the biosynthesis of ubiquinone, dolichol, heme and prenylated proteins. Activity by the mevalonate kinase ERG12 first converts mevalonate into 5-phosphomevalonate. 5-phosphomevalonate is then further converted to 5-diphosphomevalonate by the phosphomevalonate kinase ERG8. The diphosphomevalonate decarboxylase MVD then produces isopentenyl diphosphate. The isopentenyl-diphosphate delta-isomerase IDI1 then catalyzes the 1,3-allylic rearrangement of the homoallylic substrate isopentenyl (IPP) to its highly electrophilic allylic isomer, dimethylallyl diphosphate (DMAPP). Finally the farnesyl diphosphate synthase ERG20 catalyzes the sequential condensation of isopentenyl pyrophosphate with dimethylallyl pyrophosphate, and then with the resultant geranylpyrophosphate to the ultimate product farnesyl pyrophosphate. The protein is Farnesyl pyrophosphate synthase of Candida albicans (strain SC5314 / ATCC MYA-2876) (Yeast).